Reading from the N-terminus, the 193-residue chain is E3 ubiquitin-protein ligase RMA2 (193 aa).

The RING-type zinc finger occupies 21-75; sequence CNICLDQVRDPVVTLCGHLFCWPCIHKWTYASNNSRQRVDQYDHKREPPKCPVCK. Residues 175–192 traverse the membrane as a helical; Anchor for type IV membrane protein segment; sequence LSRVYLFLLCFMFMCLFL.

In terms of assembly, interacts with ERABP1. As to expression, barely detected in roots and limited to the root tips. Expressed in leaf hydathodes and in siliques.

The protein resides in the endoplasmic reticulum membrane. It carries out the reaction S-ubiquitinyl-[E2 ubiquitin-conjugating enzyme]-L-cysteine + [acceptor protein]-L-lysine = [E2 ubiquitin-conjugating enzyme]-L-cysteine + N(6)-ubiquitinyl-[acceptor protein]-L-lysine.. The protein operates within protein modification; protein ubiquitination. In terms of biological role, E3 ubiquitin-protein ligase that promotes the ubiquitination and proteasomal degradation of the auxin-binding protein ERABP1. The chain is E3 ubiquitin-protein ligase RMA2 (RMA2) from Arabidopsis thaliana (Mouse-ear cress).